The primary structure comprises 753 residues: MSSEAKCPFNHAAGGGTTNRDWWPKQLRLDLLSQHSGKSNPLDGGFNYAEAFRSLDLAAVKKDLAALMTDSQDWWPADFGHYGPLFIRMAWHSAGTYRIGDGRGGAGRGQQRFAPLNSWPDNVSLDKARRLLWPIKQKYGQKISWADLLILTGNVALETMGFKTFGFAGGREDTWEPDLDVYWGNEKTWLGGDVRYGKGAAGDNDDGGVIVADEEKHGEEVSRDNSGRNLENPLGAVQMGLIYVNPEGPDGNPDPLAAAHDIRETFARMAMNDEETVALIAGGHTFGKTHGAGPADNVGPEPEAADLENQGLGWKNSFGTGKGADTITSGLEVTWTTTPTKWGNGFFENLFKYEWELTKSPAGAHQWVARDAGETIPHAHDPSKKLRPTMLTTDLSLRFDPVYEKISRRFLENPDQLADAFARAWFKLTHRDMGPRARYLGPEVPAEELNWQDPIPALDHPLVNEQDIASLKQKILASGLSVSQLVSTAWASASTFRGSDKRGGANGARIRLAPQKDWPVNQPEQLAKVLKVLEGIQSEFNGVQSGGKKISLADLIVLGGAAAIEQAAKSAGQQVSVPFSPGRMDASQEQTDVQSVAALEPLADGFRNYLKGKYRAPAEALLIDKAQLLTLTAPEMTVLLGGLRALNVHAGQDSHGVFTHRPQTLSNDFFRNLLDMGTEWKPLSPARDVFEGRDRKTGELKWTGTRVDLVFGSHAQLRALCEVYASEDAQEKFVRDFVAAWAKVMDLDRFEIA.

The segment at residues 91-243 (WHSAGTYRIG…LGAVQMGLIY (153 aa)) is a cross-link (tryptophyl-tyrosyl-methioninium (Trp-Tyr) (with M-269)). Residue H92 is the Proton acceptor of the active site. A cross-link (tryptophyl-tyrosyl-methioninium (Tyr-Met) (with W-91)) is located at residues 243-269 (YVNPEGPDGNPDPLAAAHDIRETFARM). Heme b is bound at residue H284.

This sequence belongs to the peroxidase family. Peroxidase/catalase subfamily. Homodimer or homotetramer. Requires heme b as cofactor. Formation of the three residue Trp-Tyr-Met cross-link is important for the catalase, but not the peroxidase activity of the enzyme.

The catalysed reaction is H2O2 + AH2 = A + 2 H2O. The enzyme catalyses 2 H2O2 = O2 + 2 H2O. In terms of biological role, bifunctional enzyme with both catalase and broad-spectrum peroxidase activity. The chain is Catalase-peroxidase from Paraburkholderia xenovorans (strain LB400).